The chain runs to 335 residues: Nucleoid-associated protein YejK (335 aa).

This sequence belongs to the YejK family.

Its subcellular location is the cytoplasm. It is found in the nucleoid. This chain is Nucleoid-associated protein YejK, found in Shigella boydii serotype 18 (strain CDC 3083-94 / BS512).